We begin with the raw amino-acid sequence, 247 residues long: tRNA (guanine-N(1)-)-methyltransferase (247 aa).

Residues Gly115 and 135–140 (IGDYVL) each bind S-adenosyl-L-methionine.

The protein belongs to the RNA methyltransferase TrmD family. As to quaternary structure, homodimer.

It is found in the cytoplasm. The enzyme catalyses guanosine(37) in tRNA + S-adenosyl-L-methionine = N(1)-methylguanosine(37) in tRNA + S-adenosyl-L-homocysteine + H(+). Specifically methylates guanosine-37 in various tRNAs. The chain is tRNA (guanine-N(1)-)-methyltransferase from Alkaliphilus metalliredigens (strain QYMF).